Reading from the N-terminus, the 858-residue chain is Neurofilament medium polypeptide (858 aa).

Residue S2 is modified to N-acetylserine. The interval 2–99 (SYTMEPLGNP…KLSRSNEKEQ (98 aa)) is head. Positions 22-57 (ATYSRASASPSSGFRSQSWSRGSGSTVSSSYKRTNL) are disordered. The segment covering 30–54 (SPSSGFRSQSWSRGSGSTVSSSYKR) has biased composition (low complexity). Residue T47 is glycosylated (O-linked (GlcNAc) threonine). Residues 96 to 407 (EKEQLQGLND…KLLEGEETRF (312 aa)) enclose the IF rod domain. The segment at 100 to 131 (LQGLNDRFAGYIEKVHYLEQQNKEIEAELAAL) is coil 1A. Residues 132–144 (RQKHAGRAQLGDA) form a linker 1 region. The segment at 145–243 (YEQELRELRG…EEEVAELLAQ (99 aa)) is coil 1B. Residues 244–260 (LQASHATVERKDYLKTD) are linker 12. The coil 2A stretch occupies residues 261 to 282 (LTTALKEIRAQLECQSDHNMHQ). The tract at residues 283-286 (AEEW) is linker 2. Residues 287–407 (FKCRYAKLTE…KLLEGEETRF (121 aa)) form a coil 2B region. A tail region spans residues 408 to 858 (SAFSGSITGP…SHAVVKEIKE (451 aa)). A glycan (O-linked (GlcNAc) threonine) is linked at T427. The tract at residues 478–788 (AAKAQEEEQE…VVTNGLDVSP (311 aa)) is disordered. Composition is skewed to acidic residues over residues 484 to 500 (EEQE…EEEA) and 509 to 524 (AAEE…EEEE). A compositionally biased stretch (basic and acidic residues) spans 525-541 (AAKSDAAEEGGSKKEEI). The span at 542 to 555 (EEKEEGEEAEEEEA) shows a compositional bias: acidic residues. Positions 556–572 (EAKGKAEEAGAKVEKVK) are enriched in basic and acidic residues. Residues 576-586 (AKSPPKSPPKS) are compositionally biased toward pro residues. Residues 590–601 (EQAKAVQKAAAE) show a composition bias toward low complexity. A compositionally biased stretch (basic and acidic residues) spans 602–623 (VGKDQKAEKAAEKAAKEEKAAS). Residues 624–637 (PEKPATPKVTSPEK) show a composition bias toward low complexity. Basic and acidic residues-rich tracts occupy residues 651–664 (ITPE…KPTT) and 675–727 (ASPE…KAVV). The segment covering 728–743 (EESITVTKVTKVTAEV) has biased composition (low complexity). A compositionally biased stretch (basic and acidic residues) spans 744–771 (EVSKEARKEDIAVNGEVEEKKDEAKEKE).

This sequence belongs to the intermediate filament family. There are a number of repeats of the tripeptide K-S-P, NFM is phosphorylated on a number of the serines in this motif. It is thought that phosphorylation of NFM results in the formation of interfilament cross bridges that are important in the maintenance of axonal caliber. Post-translationally, phosphorylation seems to play a major role in the functioning of the larger neurofilament polypeptides (NF-M and NF-H), the levels of phosphorylation being altered developmentally and coincident with a change in the neurofilament function.

Its subcellular location is the cytoplasm. It is found in the cytoskeleton. It localises to the cell projection. The protein resides in the axon. Neurofilaments usually contain three intermediate filament proteins: NEFL, NEFM, and NEFH which are involved in the maintenance of neuronal caliber. May additionally cooperate with other neuronal intermediate filament proteins to form neuronal filamentous networks. The protein is Neurofilament medium polypeptide (NEFM) of Gallus gallus (Chicken).